The following is a 382-amino-acid chain: Alkanesulfonate monooxygenase (382 aa).

The protein belongs to the SsuD family.

The catalysed reaction is an alkanesulfonate + FMNH2 + O2 = an aldehyde + FMN + sulfite + H2O + 2 H(+). In terms of biological role, catalyzes the desulfonation of aliphatic sulfonates. In Ectopseudomonas mendocina (strain ymp) (Pseudomonas mendocina), this protein is Alkanesulfonate monooxygenase.